The sequence spans 66 residues: Alpha-actitoxin-Ms11a-1 (66 aa).

Residues 1–24 form the signal peptide; the sequence is MASKIFFVLAVFLVMSAVLPESFA. 3 disulfide bridges follow: Cys-26-Cys-41, Cys-33-Cys-46, and Cys-40-Cys-61.

The protein localises to the secreted. Its subcellular location is the nematocyst. Functionally, alpha-toxins act on postsynaptic membranes, they bind to the nicotinic acetylcholine receptors (nAChR) and thus inhibit them. This toxin competes with alpha-bungarotoxin for binding to orthosteric sites on muscle-type T.carlifornicus (IC(50)=408 nM) and human alpha-7/CHRNA7 nAChRs (IC(50)=14.16 uM). The protein is Alpha-actitoxin-Ms11a-1 of Metridium senile (Brown sea anemone).